A 286-amino-acid chain; its full sequence is MLGRAQRTLKRKVCYSGVGVHFGKPAMLTLEPAEENTGVVFSRHAASGQYIPARLANVCGTGRSTTLSSQGGVVSTVEHLLAALYSCGVDNVRIHCSEDEIPIGDGSSQVFVDLIDQAGVEEQGQTVPIARLTHPVYYQHQDTILAAFPSEEFKISYTLHYSHNSAIGTQYRSQVISEESFRKEIAPCRTFALYNELCFLMERGLIGGGCLGNAVLFKDDSVISLGKLRFPDEPVRHKMLDLIGDLSLIGKPFLAHIIAVGSGHSSNIALGNKILEALQYEQELVK.

Residues H79, H237, and D241 each contribute to the Zn(2+) site. H264 serves as the catalytic Proton donor.

This sequence belongs to the LpxC family. Zn(2+) serves as cofactor.

It catalyses the reaction a UDP-3-O-[(3R)-3-hydroxyacyl]-N-acetyl-alpha-D-glucosamine + H2O = a UDP-3-O-[(3R)-3-hydroxyacyl]-alpha-D-glucosamine + acetate. It functions in the pathway glycolipid biosynthesis; lipid IV(A) biosynthesis; lipid IV(A) from (3R)-3-hydroxytetradecanoyl-[acyl-carrier-protein] and UDP-N-acetyl-alpha-D-glucosamine: step 2/6. In terms of biological role, catalyzes the hydrolysis of UDP-3-O-myristoyl-N-acetylglucosamine to form UDP-3-O-myristoylglucosamine and acetate, the committed step in lipid A biosynthesis. The polypeptide is UDP-3-O-acyl-N-acetylglucosamine deacetylase (Chlamydia muridarum (strain MoPn / Nigg)).